A 441-amino-acid chain; its full sequence is Serine hydroxymethyltransferase (441 aa).

Residues L119 and 123-125 (GHL) each bind (6S)-5,6,7,8-tetrahydrofolate. K228 carries the N6-(pyridoxal phosphate)lysine modification. 370-372 (SPF) contacts (6S)-5,6,7,8-tetrahydrofolate.

The protein belongs to the SHMT family. Homodimer. Requires pyridoxal 5'-phosphate as cofactor.

It is found in the cytoplasm. It carries out the reaction (6R)-5,10-methylene-5,6,7,8-tetrahydrofolate + glycine + H2O = (6S)-5,6,7,8-tetrahydrofolate + L-serine. The protein operates within one-carbon metabolism; tetrahydrofolate interconversion. It participates in amino-acid biosynthesis; glycine biosynthesis; glycine from L-serine: step 1/1. Its function is as follows. Catalyzes the reversible interconversion of serine and glycine with tetrahydrofolate (THF) serving as the one-carbon carrier. This reaction serves as the major source of one-carbon groups required for the biosynthesis of purines, thymidylate, methionine, and other important biomolecules. Also exhibits THF-independent aldolase activity toward beta-hydroxyamino acids, producing glycine and aldehydes, via a retro-aldol mechanism. In Chlorobium phaeovibrioides (strain DSM 265 / 1930) (Prosthecochloris vibrioformis (strain DSM 265)), this protein is Serine hydroxymethyltransferase.